The sequence spans 446 residues: Phosphoglucosamine mutase (446 aa).

The Phosphoserine intermediate role is filled by serine 103. The Mg(2+) site is built by serine 103, aspartate 242, aspartate 244, and aspartate 246. Position 103 is a phosphoserine (serine 103).

The protein belongs to the phosphohexose mutase family. The cofactor is Mg(2+). Activated by phosphorylation.

The enzyme catalyses alpha-D-glucosamine 1-phosphate = D-glucosamine 6-phosphate. Its function is as follows. Catalyzes the conversion of glucosamine-6-phosphate to glucosamine-1-phosphate. This chain is Phosphoglucosamine mutase, found in Vibrio atlanticus (strain LGP32) (Vibrio splendidus (strain Mel32)).